Reading from the N-terminus, the 592-residue chain is Bifunctional purine biosynthesis protein ADE17 (592 aa).

One can recognise an MGS-like domain in the interval 1–147 (MANYTKTAIL…KNHARVTILS (147 aa)). IMP is bound by residues 35 to 38 (SGGT), 65 to 68 (RVKT), 102 to 103 (CN), and 126 to 127 (DI). Lysine 138 serves as the catalytic Proton donor/acceptor; for FAICAR cyclization activity. 5-amino-1-(5-phospho-beta-D-ribosyl)imidazole-4-carboxamide contacts are provided by residues 206–207 (RY), histidine 267, glycine 315, aspartate 338, asparagine 430, and arginine 450. The active-site Proton acceptor; for AICAR formyltransferase activity is histidine 267. (6R)-10-formyltetrahydrofolate is bound at residue isoleucine 451. Phenylalanine 541 is a binding site for 5-amino-1-(5-phospho-beta-D-ribosyl)imidazole-4-carboxamide. Residues aspartate 546 and 565 to 566 (SV) contribute to the (6R)-10-formyltetrahydrofolate site. Residue arginine 588 coordinates 5-amino-1-(5-phospho-beta-D-ribosyl)imidazole-4-carboxamide.

This sequence belongs to the PurH family. Homodimer.

The protein resides in the cytoplasm. The protein localises to the cytosol. The catalysed reaction is (6R)-10-formyltetrahydrofolate + 5-amino-1-(5-phospho-beta-D-ribosyl)imidazole-4-carboxamide = 5-formamido-1-(5-phospho-D-ribosyl)imidazole-4-carboxamide + (6S)-5,6,7,8-tetrahydrofolate. The enzyme catalyses IMP + H2O = 5-formamido-1-(5-phospho-D-ribosyl)imidazole-4-carboxamide. Its pathway is purine metabolism; IMP biosynthesis via de novo pathway; 5-formamido-1-(5-phospho-D-ribosyl)imidazole-4-carboxamide from 5-amino-1-(5-phospho-D-ribosyl)imidazole-4-carboxamide (10-formyl THF route): step 1/1. It functions in the pathway purine metabolism; IMP biosynthesis via de novo pathway; IMP from 5-formamido-1-(5-phospho-D-ribosyl)imidazole-4-carboxamide: step 1/1. Bifunctional enzyme that catalyzes the last two steps of purine biosynthesis. Acts as a transformylase that incorporates a formyl group to the AMP analog AICAR (5-amino-1-(5-phospho-beta-D-ribosyl)imidazole-4-carboxamide) to produce the intermediate formyl-AICAR (FAICAR). Also catalyzes the cyclization of FAICAR to IMP. The sequence is that of Bifunctional purine biosynthesis protein ADE17 from Saccharomyces cerevisiae (strain ATCC 204508 / S288c) (Baker's yeast).